We begin with the raw amino-acid sequence, 164 residues long: Aspartate carbamoyltransferase regulatory chain (164 aa).

Zn(2+) is bound by residues cysteine 116, cysteine 121, cysteine 146, and cysteine 149.

The protein belongs to the PyrI family. As to quaternary structure, contains catalytic and regulatory chains. It depends on Zn(2+) as a cofactor.

Functionally, involved in allosteric regulation of aspartate carbamoyltransferase. The polypeptide is Aspartate carbamoyltransferase regulatory chain (Staphylothermus marinus (strain ATCC 43588 / DSM 3639 / JCM 9404 / F1)).